The primary structure comprises 160 residues: Transcriptional repressor NrdR (160 aa).

Residues 3 to 34 (CPFCGHADTQVVDSRVSEEGDTIRRRRRCLSC) fold into a zinc finger. Residues 49-139 (PTVVKRDGSR…VYKSFEDIGE (91 aa)) enclose the ATP-cone domain.

The protein belongs to the NrdR family. Zn(2+) is required as a cofactor.

Its function is as follows. Negatively regulates transcription of bacterial ribonucleotide reductase nrd genes and operons by binding to NrdR-boxes. This is Transcriptional repressor NrdR from Bordetella avium (strain 197N).